Here is a 357-residue protein sequence, read N- to C-terminus: DNA integrity scanning protein DisA (357 aa).

Residues 8 to 146 (VKSMINILQL…GNLRYTLKDI (139 aa)) form the DAC domain. Residues glycine 75, leucine 93, and 106-110 (MRHRT) contribute to the ATP site.

The protein belongs to the DisA family. Homooctamer. Mg(2+) serves as cofactor.

The catalysed reaction is 2 ATP = 3',3'-c-di-AMP + 2 diphosphate. In terms of biological role, participates in a DNA-damage check-point that is active prior to asymmetric division when DNA is damaged. DisA forms globular foci that rapidly scan along the chromosomes during sporulation, searching for lesions. When a lesion is present, DisA pauses at the lesion site. This triggers a cellular response that culminates in a temporary block in sporulation initiation. Its function is as follows. Also has diadenylate cyclase activity, catalyzing the condensation of 2 ATP molecules into cyclic di-AMP (c-di-AMP). c-di-AMP acts as a signaling molecule that couples DNA integrity with progression of sporulation. The rise in c-di-AMP level generated by DisA while scanning the chromosome, operates as a positive signal that advances sporulation; upon encountering a lesion, the DisA focus arrests at the damaged site and halts c-di-AMP synthesis. This Bacillus cereus (strain AH187) protein is DNA integrity scanning protein DisA.